Reading from the N-terminus, the 182-residue chain is Protein YIPF6 homolog (182 aa).

The Cytoplasmic segment spans residues Met1 to Asp45. Residues Trp46–Ala66 form a helical membrane-spanning segment. The Lumenal segment spans residues Glu67 to Lys70. A helical transmembrane segment spans residues Ala71–Asn91. Topologically, residues Gly92–Ser104 are cytoplasmic. Residues Val105–Ile125 traverse the membrane as a helical segment. Residues Gln126–Lys133 are Lumenal-facing. A helical membrane pass occupies residues Leu134 to Ser154. The Cytoplasmic portion of the chain corresponds to Ser155–Arg161. A helical membrane pass occupies residues Leu162 to Gln182.

The protein belongs to the YIP1 family.

It is found in the golgi apparatus membrane. The chain is Protein YIPF6 homolog (yipf6) from Dictyostelium discoideum (Social amoeba).